A 570-amino-acid polypeptide reads, in one-letter code: Protein translocase subunit SecD (570 aa).

A compositionally biased stretch (polar residues) spans 104–117 (GANATGTPSASETG). Positions 104–198 (GANATGTPSA…SASASGDDAT (95 aa)) are disordered. Residues 122 to 146 (KATDKATDKATDKATDGDKATDGDK) show a composition bias toward basic and acidic residues. 2 stretches are compositionally biased toward low complexity: residues 147–161 (ASGT…SATS) and 172–196 (ADPS…SGDD). 5 helical membrane passes run 370 to 390 (AGLI…LFYY), 395 to 415 (FIAV…MALL), 419 to 439 (IGFA…GITA), 474 to 494 (ILVS…VTVG), and 498 to 518 (GFAF…FLFT). The tract at residues 540 to 570 (LDPKALGAKPPLRRTRRPSRPAAGPVDPKEA) is disordered.

Belongs to the SecD/SecF family. SecD subfamily. As to quaternary structure, forms a complex with SecF. Part of the essential Sec protein translocation apparatus which comprises SecA, SecYEG and auxiliary proteins SecDF. Other proteins may also be involved.

It is found in the cell membrane. In terms of biological role, part of the Sec protein translocase complex. Interacts with the SecYEG preprotein conducting channel. SecDF uses the proton motive force (PMF) to complete protein translocation after the ATP-dependent function of SecA. The polypeptide is Protein translocase subunit SecD (Streptomyces coelicolor (strain ATCC BAA-471 / A3(2) / M145)).